Reading from the N-terminus, the 514-residue chain is Serine--tRNA ligase, cytoplasmic (514 aa).

Met-1 carries the post-translational modification N-acetylmethionine. The interaction with tRNA stretch occupies residues 9–61 (RVDKGGDPALIRETQEKRFKDPGLVDQLVKADSEWRRCRFRADNLNKLKNLCS). Ser-241 carries the phosphoserine modification. Residues Thr-271 and Arg-302 each coordinate L-serine. ATP-binding positions include 302-304 (RQE) and 318-321 (VHQF). Lys-323 is modified (N6-acetyllysine). Glu-325 lines the L-serine pocket. Position 391–394 (391–394 (ELVS)) interacts with ATP. Asn-427 contacts L-serine. The tract at residues 471 to 514 (VKPAPIDQEPSKKQKKQHEGSKKKAAARDVALESRLQNMEVTDA) is disordered. A compositionally biased stretch (basic and acidic residues) spans 479–502 (EPSKKQKKQHEGSKKKAAARDVAL). Residues 482–494 (KKQKKQHEGSKKK) carry the Nuclear localization signal motif. A compositionally biased stretch (polar residues) spans 505–514 (RLQNMEVTDA).

Belongs to the class-II aminoacyl-tRNA synthetase family. Type-1 seryl-tRNA synthetase subfamily. As to quaternary structure, homodimer. The tRNA molecule may bind across the dimer. Interacts with SIRT2. Interacts with METTL6; interaction is required for the tRNA N(3)-methylcytidine methyltransferase activity of METTL6.

It is found in the cytoplasm. The protein localises to the nucleus. It carries out the reaction tRNA(Ser) + L-serine + ATP = L-seryl-tRNA(Ser) + AMP + diphosphate + H(+). The catalysed reaction is tRNA(Sec) + L-serine + ATP = L-seryl-tRNA(Sec) + AMP + diphosphate + H(+). Its pathway is aminoacyl-tRNA biosynthesis; selenocysteinyl-tRNA(Sec) biosynthesis; L-seryl-tRNA(Sec) from L-serine and tRNA(Sec): step 1/1. In terms of biological role, catalyzes the attachment of serine to tRNA(Ser) in a two-step reaction: serine is first activated by ATP to form Ser-AMP and then transferred to the acceptor end of tRNA(Ser). Is probably also able to aminoacylate tRNA(Sec) with serine, to form the misacylated tRNA L-seryl-tRNA(Sec), which will be further converted into selenocysteinyl-tRNA(Sec). In the nucleus, binds to the VEGFA core promoter and prevents MYC binding and transcriptional activation by MYC. Recruits SIRT2 to the VEGFA promoter, promoting deacetylation of histone H4 at 'Lys-16' (H4K16). Thereby, inhibits the production of VEGFA and sprouting angiogenesis mediated by VEGFA. The sequence is that of Serine--tRNA ligase, cytoplasmic (SARS1) from Macaca fascicularis (Crab-eating macaque).